The chain runs to 395 residues: Argininosuccinate synthase (395 aa).

8–16 (AYSGGLDTS) lines the ATP pocket. 2 residues coordinate L-citrulline: tyrosine 86 and serine 91. Glycine 116 is a binding site for ATP. Positions 118, 122, and 123 each coordinate L-aspartate. Asparagine 122 lines the L-citrulline pocket. L-citrulline-binding residues include arginine 126, serine 172, serine 181, glutamate 257, and tyrosine 269.

Belongs to the argininosuccinate synthase family. Type 1 subfamily. Homotetramer.

It is found in the cytoplasm. The catalysed reaction is L-citrulline + L-aspartate + ATP = 2-(N(omega)-L-arginino)succinate + AMP + diphosphate + H(+). Its pathway is amino-acid biosynthesis; L-arginine biosynthesis; L-arginine from L-ornithine and carbamoyl phosphate: step 2/3. This is Argininosuccinate synthase from Methanosarcina barkeri (strain Fusaro / DSM 804).